The sequence spans 532 residues: Protein tweety homolog 2 (532 aa).

The Extracellular segment spans residues 1-44 (MPAARVEYIAPWWVVWLHSVPHLGLRLQRVDSTFSPGDETYQES). A helical transmembrane segment spans residues 45–65 (LLFLGVLAAIGLGLNLIFLTV). At 66–87 (YLVCTCCCRRDHTVQTKQQESC) the chain is on the cytoplasmic side. The helical transmembrane segment at 88-108 (CVTWTAVVAGLLCCAAVGVGF) threads the bilayer. The Extracellular segment spans residues 109–213 (YGNSETNDGM…QTAYVEYYRW (105 aa)). Residues E113 and D116 each contribute to the Ca(2+) site. An N-linked (GlcNAc...) asparagine glycan is attached at N129. The RGD signature appears at 164–166 (RGD). Phosphothreonine is present on T199. Residues 214-234 (LSYLLLFILDLVICLVTCLGL) form a helical membrane-spanning segment. The Cytoplasmic portion of the chain corresponds to 235-240 (ARRSKC). Residues 241-261 (LLASMLCCGILTLILSWASLA) traverse the membrane as a helical segment. Residues 262–385 (ADAAAAVGTS…DALTGICYDG (124 aa)) lie on the Extracellular side of the membrane. Cystine bridges form between C274-C382 and C300-C367. N283 and N352 each carry an N-linked (GlcNAc...) asparagine glycan. The chain crosses the membrane as a helical span at residues 386–406 (IEGLLFLGLFSLLAALAFSTL). Over 407–532 (TCAGPRAWKY…EHLRHYEFPS (126 aa)) the chain is Cytoplasmic. S504 is subject to Phosphoserine. The PY-motif; mediates interaction with NEDD4L signature appears at 506 to 509 (PPTY).

The protein belongs to the tweety family. As to quaternary structure, forms cis-homodimers in the presence of Ca(+2) and forms monomers and trans-dimers in the absence of Ca(2+). Interacts with NEDD4L. In terms of processing, ubiquitinated by NEDD4L, leading to its proteasomal degradation.

The protein resides in the cell membrane. It catalyses the reaction chloride(in) = chloride(out). The catalysed reaction is L-glutamate(out) = L-glutamate(in). Its activity is regulated as follows. Inhibited by (4-[(2-butyl-6,7-dichloro-2- cyclopentyl-2,3-dihydro-1-oxo-1H-inden-5-yl)oxy]butanoic acid). In terms of biological role, calcium-independent, swelling-dependent volume-regulated anion channel (VRAC-swell) which plays a pivotal role in the process of regulatory volume decrease (RVD) in the brain through the efflux of anions like chloride and organic osmolytes like glutamate. Probable large-conductance Ca(2+)-activated chloride channel. The protein is Protein tweety homolog 2 (Ttyh2) of Mus musculus (Mouse).